A 204-amino-acid chain; its full sequence is Recombination protein RecR (204 aa).

The C4-type zinc-finger motif lies at cysteine 63–cysteine 78. A Toprim domain is found at threonine 86–proline 181.

This sequence belongs to the RecR family.

May play a role in DNA repair. It seems to be involved in an RecBC-independent recombinational process of DNA repair. It may act with RecF and RecO. This chain is Recombination protein RecR, found in Chloroflexus aurantiacus (strain ATCC 29366 / DSM 635 / J-10-fl).